The primary structure comprises 1613 residues: Reverse gyrase (1613 aa).

The RG N-terminal-type zinc-finger motif lies at 1–38 (MIPMIYKEMCPNCNGEITSERLAIGVCEKCLKEENVFE). The Zn(2+) site is built by Cys10, Cys13, Cys27, and Cys30. ATP is bound by residues Gln83 and 100–107 (VPTGVGKS). Positions 87 to 291 (AKRVLKNKSF…LYRELLDFEI (205 aa)) constitute a Helicase ATP-binding domain. The short motif at 203–206 (DDVD) is the DEAD box element. Residues 310–525 (SKEKILEYIK…IDEVNLEELI (216 aa)) form the Helicase C-terminal domain. The tract at residues 546 to 1613 (DLLKSVLMVV…ALHEEILSIR (1068 aa)) is topoisomerase I. The 163-residue stretch at 550–712 (SVLMVVESPN…NIYRVGFNEI (163 aa)) folds into the Toprim domain. Glu556 and Asp681 together coordinate Mg(2+). In terms of domain architecture, Topo IA-type catalytic spans 733–1613 (DENKVKGQVV…ALHEEILSIR (881 aa)). The 130-residue stretch at 1070–1199 (FAGLVLGDGS…IGIYLNSIGI (130 aa)) folds into the DOD-type homing endonuclease domain. The O-(5'-phospho-DNA)-tyrosine intermediate role is filled by Tyr1363.

In the N-terminal section; belongs to the DEAD box helicase family. DDVD subfamily. This sequence in the C-terminal section; belongs to the type IA topoisomerase family. Monomer. It depends on Zn(2+) as a cofactor. Mg(2+) is required as a cofactor. In terms of processing, this protein undergoes a protein self splicing that involves a post-translational excision of the intervening region (intein) followed by peptide ligation.

Its subcellular location is the cytoplasm. The catalysed reaction is ATP + H2O = ADP + phosphate + H(+). Functionally, modifies the topological state of DNA by introducing positive supercoils in an ATP-dependent process, increasing the linking number in steps of +1. Binds to single-stranded DNA, transiently cleaves and then rejoins the ends, introducing a positive supercoil in the process. The scissile phosphodiester is attacked by the catalytic tyrosine of the enzyme, resulting in the formation of a DNA-(5'-phosphotyrosyl)-enzyme intermediate. Probably involved in rewinding DNA strands in regions of the chromosome that have opened up to allow replication, transcription, DNA repair and/or for DNA protection. The polypeptide is Reverse gyrase (Methanocaldococcus jannaschii (strain ATCC 43067 / DSM 2661 / JAL-1 / JCM 10045 / NBRC 100440) (Methanococcus jannaschii)).